The primary structure comprises 300 residues: Mycothiol acetyltransferase (300 aa).

N-acetyltransferase domains are found at residues 4–140 (IDWR…RPLT) and 151–300 (VRLA…AVAD). D36 contacts 1D-myo-inositol 2-(L-cysteinylamino)-2-deoxy-alpha-D-glucopyranoside. 79 to 81 (LVV) contributes to the acetyl-CoA binding site. Residues E178, K219, and E227 each contribute to the 1D-myo-inositol 2-(L-cysteinylamino)-2-deoxy-alpha-D-glucopyranoside site. Position 231–233 (231–233 (VGV)) interacts with acetyl-CoA. Y269 serves as a coordination point for 1D-myo-inositol 2-(L-cysteinylamino)-2-deoxy-alpha-D-glucopyranoside. Position 274 to 279 (274 to 279 (NGAAVK)) interacts with acetyl-CoA.

The protein belongs to the acetyltransferase family. MshD subfamily. In terms of assembly, monomer.

It carries out the reaction 1D-myo-inositol 2-(L-cysteinylamino)-2-deoxy-alpha-D-glucopyranoside + acetyl-CoA = mycothiol + CoA + H(+). Catalyzes the transfer of acetyl from acetyl-CoA to desacetylmycothiol (Cys-GlcN-Ins) to form mycothiol. The protein is Mycothiol acetyltransferase of Mycobacterium sp. (strain MCS).